The following is a 266-amino-acid chain: 3-methyl-2-oxobutanoate hydroxymethyltransferase 2 (266 aa).

Residues D45 and D84 each coordinate Mg(2+). Residues 45–46, D84, and K112 contribute to the 3-methyl-2-oxobutanoate site; that span reads DS. E114 is a Mg(2+) binding site. Catalysis depends on E181, which acts as the Proton acceptor.

It belongs to the PanB family. As to quaternary structure, homodecamer; pentamer of dimers. Requires Mg(2+) as cofactor.

The protein resides in the cytoplasm. It carries out the reaction 3-methyl-2-oxobutanoate + (6R)-5,10-methylene-5,6,7,8-tetrahydrofolate + H2O = 2-dehydropantoate + (6S)-5,6,7,8-tetrahydrofolate. It participates in cofactor biosynthesis; (R)-pantothenate biosynthesis; (R)-pantoate from 3-methyl-2-oxobutanoate: step 1/2. Its function is as follows. Catalyzes the reversible reaction in which hydroxymethyl group from 5,10-methylenetetrahydrofolate is transferred onto alpha-ketoisovalerate to form ketopantoate. The polypeptide is 3-methyl-2-oxobutanoate hydroxymethyltransferase 2 (Pseudomonas entomophila (strain L48)).